The chain runs to 296 residues: 4-diphosphocytidyl-2-C-methyl-D-erythritol kinase (296 aa).

Lys11 is a catalytic residue. 95 to 105 (PVAAGMAGGSS) lines the ATP pocket. Asp137 is an active-site residue.

It belongs to the GHMP kinase family. IspE subfamily.

It carries out the reaction 4-CDP-2-C-methyl-D-erythritol + ATP = 4-CDP-2-C-methyl-D-erythritol 2-phosphate + ADP + H(+). Its pathway is isoprenoid biosynthesis; isopentenyl diphosphate biosynthesis via DXP pathway; isopentenyl diphosphate from 1-deoxy-D-xylulose 5-phosphate: step 3/6. In terms of biological role, catalyzes the phosphorylation of the position 2 hydroxy group of 4-diphosphocytidyl-2C-methyl-D-erythritol. The protein is 4-diphosphocytidyl-2-C-methyl-D-erythritol kinase of Clostridioides difficile (strain 630) (Peptoclostridium difficile).